We begin with the raw amino-acid sequence, 278 residues long: HTH-type transcriptional activator RhaS (278 aa).

The HTH araC/xylS-type domain occupies 174–272 (NLLLAWLEDH…NWSPRDIRQG (99 aa)). DNA-binding regions (H-T-H motif) lie at residues 191 to 212 (DAVA…KQQT) and 239 to 262 (VTDI…RREF).

In terms of assembly, binds DNA as a dimer.

Its subcellular location is the cytoplasm. Activates expression of the rhaBAD and rhaT operons. This chain is HTH-type transcriptional activator RhaS, found in Escherichia coli O127:H6 (strain E2348/69 / EPEC).